Consider the following 330-residue polypeptide: Phosphate acyltransferase (330 aa).

Belongs to the PlsX family. In terms of assembly, homodimer. Probably interacts with PlsY.

The protein resides in the cytoplasm. The enzyme catalyses a fatty acyl-[ACP] + phosphate = an acyl phosphate + holo-[ACP]. It functions in the pathway lipid metabolism; phospholipid metabolism. In terms of biological role, catalyzes the reversible formation of acyl-phosphate (acyl-PO(4)) from acyl-[acyl-carrier-protein] (acyl-ACP). This enzyme utilizes acyl-ACP as fatty acyl donor, but not acyl-CoA. This Bacillus cereus (strain G9842) protein is Phosphate acyltransferase.